A 230-amino-acid chain; its full sequence is Porin OmpL (230 aa).

Positions 1–20 (MKKINAIILLSSLTSASVFA) are cleaved as a signal peptide.

This sequence belongs to the oligogalacturonate-specific porin KdgM (TC 1.B.35) family. OmpL subfamily.

The protein localises to the cell outer membrane. Its function is as follows. Outer membrane channel protein that allows an efficient diffusion of low-molecular-weight solutes such as small sugars and tetraglycine. However, the specific substrate recognized by the OmpL channel is unknown. The polypeptide is Porin OmpL (ompL) (Escherichia coli (strain K12)).